Here is a 583-residue protein sequence, read N- to C-terminus: Isocitrate dehydrogenase kinase/phosphatase (583 aa).

ATP contacts are provided by residues 315–321 (APGIRGM) and K336. D371 is a catalytic residue.

This sequence belongs to the AceK family.

It localises to the cytoplasm. The catalysed reaction is L-seryl-[isocitrate dehydrogenase] + ATP = O-phospho-L-seryl-[isocitrate dehydrogenase] + ADP + H(+). Functionally, bifunctional enzyme which can phosphorylate or dephosphorylate isocitrate dehydrogenase (IDH) on a specific serine residue. This is a regulatory mechanism which enables bacteria to bypass the Krebs cycle via the glyoxylate shunt in response to the source of carbon. When bacteria are grown on glucose, IDH is fully active and unphosphorylated, but when grown on acetate or ethanol, the activity of IDH declines drastically concomitant with its phosphorylation. The chain is Isocitrate dehydrogenase kinase/phosphatase from Salmonella paratyphi B (strain ATCC BAA-1250 / SPB7).